The chain runs to 287 residues: MAAPRQIPSHIVRLKPSCSTDSSFTRTPVPTVSLASRELPVSSWQVTEPSSKNLWEQICKEYEAEQPPFPEGYKVKQEPVITVAPVEEMLFHGFSAEHYFPVSHFTMISRTPCPQDKSETINPKTCSPKEYLETFIFPVLLPGMASLLHQAKKEKCFERKRTKFIACDFLTEWLYNQNPKRAGEPFTEFFSIPFVEERLKQHPRPPIPLSLLLTEEEAALYIQSFWRACVVRCDPEIQELRQWQKKLREAKHIHQQVKIFWAKQEQKVKCKMEDDAVPAAKMKIPSS.

This Homo sapiens (Human) protein is IQ domain-containing protein K (IQCK).